We begin with the raw amino-acid sequence, 129 residues long: Glycine cleavage system H protein (129 aa).

The Lipoyl-binding domain maps to 24–106; sequence LVRIGISAFA…HGEGWLLLVK (83 aa). The residue at position 65 (Lys65) is an N6-lipoyllysine.

The protein belongs to the GcvH family. In terms of assembly, the glycine cleavage system is composed of four proteins: P, T, L and H. (R)-lipoate serves as cofactor.

The glycine cleavage system catalyzes the degradation of glycine. The H protein shuttles the methylamine group of glycine from the P protein to the T protein. The chain is Glycine cleavage system H protein from Prochlorococcus marinus (strain SARG / CCMP1375 / SS120).